The sequence spans 174 residues: 5-hydroxymethyl-dUMP N-hydrolase (174 aa).

Position 2 is an N-acetylalanine (alanine 2). Glycine 27 serves as a coordination point for 5-hydroxymethyl-dUMP. Serine 28 bears the Phosphoserine mark. 5-hydroxymethyl-dUMP contacts are provided by isoleucine 29, arginine 30, glycine 31, serine 98, glycine 100, and glutamate 104. The residue at position 98 (serine 98) is a Phosphoserine. A phosphoserine mark is found at serine 123, serine 128, serine 138, and serine 169. Serine 128 lines the 5-hydroxymethyl-dUMP pocket.

The protein belongs to the 2'-deoxynucleoside 5'-phosphate N-hydrolase 1 family. As to quaternary structure, monomer and homodimer. In terms of tissue distribution, expressed at low levels in brain, colon, lung, peripheral blood leukocytes, placenta, small intestine, and thymus. Expressed at high levels in heart, kidney, liver, skeletal muscle and spleen. Overexpressed in a significant proportion of breast cancers.

It localises to the cytoplasm. Its subcellular location is the nucleus. The enzyme catalyses 5-hydroxymethyl-dUMP + H2O = 5-hydroxymethyluracil + 2-deoxy-D-ribose 5-phosphate. Its activity is regulated as follows. Inhibited by AMP and GMP. Its function is as follows. Part of a nucleotide salvage pathway that eliminates epigenetically modified 5-hydroxymethyl-dCMP (hmdCMP) in a two-step process entailing deamination to cytotoxic 5-hydroxymethyl-dUMP (hmdUMP), followed by its hydrolysis into 5-hydroxymethyluracil (hmU) and 2-deoxy-D-ribose 5-phosphate (deoxyribosephosphate). Catalyzes the second step in that pathway, the hydrolysis of the N-glycosidic bond in hmdUMP, degrading this cytotoxic nucleotide to avoid its genomic integration. In Homo sapiens (Human), this protein is 5-hydroxymethyl-dUMP N-hydrolase.